We begin with the raw amino-acid sequence, 932 residues long: 2-oxoglutarate dehydrogenase E1 component (932 aa).

Belongs to the alpha-ketoglutarate dehydrogenase family. In terms of assembly, homodimer. Part of the 2-oxoglutarate dehydrogenase (OGDH) complex composed of E1 (2-oxoglutarate dehydrogenase), E2 (dihydrolipoamide succinyltransferase) and E3 (dihydrolipoamide dehydrogenase); the complex contains multiple copies of the three enzymatic components (E1, E2 and E3). The cofactor is thiamine diphosphate.

The catalysed reaction is N(6)-[(R)-lipoyl]-L-lysyl-[protein] + 2-oxoglutarate + H(+) = N(6)-[(R)-S(8)-succinyldihydrolipoyl]-L-lysyl-[protein] + CO2. Functionally, E1 component of the 2-oxoglutarate dehydrogenase (OGDH) complex which catalyzes the decarboxylation of 2-oxoglutarate, the first step in the conversion of 2-oxoglutarate to succinyl-CoA and CO(2). This chain is 2-oxoglutarate dehydrogenase E1 component, found in Staphylococcus aureus (strain JH9).